Here is a 122-residue protein sequence, read N- to C-terminus: MTSKVVFLLLLSLVVVLLPLYASAAARVGGWSPISNVTDPQVVEIGEFAVSEYNKRSESGLKFETVVSGETQVVSGTNYRLKVAANDGDGVSKNYLAIVWDKPWMKFRNLTSFEPANNGRFL.

An N-terminal signal peptide occupies residues 1–26 (MTSKVVFLLLLSLVVVLLPLYASAAA). The Cystatin domain maps to 29 to 117 (GGWSPISNVT…RNLTSFEPAN (89 aa)). N-linked (GlcNAc...) asparagine glycosylation occurs at Asn36. Residues 72–76 (QVVSG) carry the Secondary area of contact motif. Asn109 carries an N-linked (GlcNAc...) asparagine glycan.

Belongs to the cystatin family. Phytocystatin subfamily.

The protein localises to the secreted. Functionally, specific inhibitor of cysteine proteinases. Probably involved in the regulation of endogenous processes and in defense against pests and pathogens. The polypeptide is Cysteine proteinase inhibitor 5 (CYS5) (Arabidopsis thaliana (Mouse-ear cress)).